The primary structure comprises 275 residues: Phosphonoacetaldehyde hydrolase (275 aa).

Residue aspartate 15 is the Nucleophile of the active site. The Mg(2+) site is built by aspartate 15 and alanine 17. The Schiff-base intermediate with substrate role is filled by lysine 56. Position 189 (aspartate 189) interacts with Mg(2+).

It belongs to the HAD-like hydrolase superfamily. PhnX family. In terms of assembly, homodimer. It depends on Mg(2+) as a cofactor.

It catalyses the reaction phosphonoacetaldehyde + H2O = acetaldehyde + phosphate + H(+). Functionally, involved in phosphonate degradation. The polypeptide is Phosphonoacetaldehyde hydrolase (Pseudomonas fluorescens (strain SBW25)).